The chain runs to 356 residues: Leucine-rich repeat and transmembrane domain-containing protein 1 (356 aa).

The first 32 residues, 1-32 (MLNEGLCCGAWAMKGTLLLVSSVGLLLPGVGS), serve as a signal peptide directing secretion. The region spanning 33–62 (CPMKCLCHPSSNSVDCSGQGLSKVPRDLPP) is the LRRNT domain. The Extracellular portion of the chain corresponds to 33-299 (CPMKCLCHPS…PTNLRHAVAT (267 aa)). 5 LRR repeats span residues 63–84 (WTVTLLLQDNRIHWLPALAFQS), 87–108 (LLSTLNLSNNSLSNLAAEAFYG), 111–132 (HLRVLNVTQNSLLSIESSFAHA), 135–156 (GLRELDLSSNSLRILPTSLGKP), and 159–180 (NLTVFAVQQNHLLHLDRELLEA). 2 N-linked (GlcNAc...) asparagine glycosylation sites follow: Asn-92 and Asn-116. The N-linked (GlcNAc...) asparagine glycan is linked to Asn-159. Positions 192–246 (NPWICDCHLLGLKLWLERFTFQGGETDGAICRLPEPWQGKALLSIPHELYQPCSL) constitute an LRRCT domain. The segment covering 255–277 (LVQQPGSAPQDAQKSHENSSGQQ) has biased composition (polar residues). The segment at 255–288 (LVQQPGSAPQDAQKSHENSSGQQDPLECEAKPKP) is disordered. A helical membrane pass occupies residues 300 to 320 (VVITGVVCGIVCLMMLAAAIY). Residues 321–356 (GCTYAAITAQYQGRPLASARKSEKMGSKELMDSSSA) lie on the Cytoplasmic side of the membrane.

The protein resides in the membrane. The sequence is that of Leucine-rich repeat and transmembrane domain-containing protein 1 (Lrtm1) from Mus musculus (Mouse).